We begin with the raw amino-acid sequence, 92 residues long: Small ribosomal subunit protein uS19c (92 aa).

Belongs to the universal ribosomal protein uS19 family.

Its subcellular location is the plastid. It is found in the chloroplast. Its function is as follows. Protein S19 forms a complex with S13 that binds strongly to the 16S ribosomal RNA. This Platanus occidentalis (Sycamore) protein is Small ribosomal subunit protein uS19c.